We begin with the raw amino-acid sequence, 1069 residues long: Carbamoyl phosphate synthase large chain (1069 aa).

The interval 1–401 (MPLNKDIKKV…AFLKGIRSLE (401 aa)) is carboxyphosphate synthetic domain. ATP is bound by residues Arg-129, Arg-169, Gly-175, Gly-176, Lys-208, Val-210, Glu-215, Gly-241, Ile-242, His-243, Gln-284, and Glu-298. The ATP-grasp 1 domain maps to 133 to 327 (RDMMNRIGEP…IAKLAAKIAL (195 aa)). Mg(2+) contacts are provided by Gln-284, Glu-298, and Asn-300. Mn(2+)-binding residues include Gln-284, Glu-298, and Asn-300. Positions 402–549 (IGKYSLDHKK…YSTYEQYDEV (148 aa)) are oligomerization domain. Positions 550–932 (EVSNRRKVIV…ALYKGFVGAN (383 aa)) are carbamoyl phosphate synthetic domain. One can recognise an ATP-grasp 2 domain in the interval 674-864 (DELLERLDIS…IVDIATQVMM (191 aa)). ATP contacts are provided by Arg-710, Lys-749, Leu-751, Glu-755, Gly-780, Val-781, His-782, Ser-783, Gln-823, and Glu-835. Residues Gln-823, Glu-835, and Asn-837 each coordinate Mg(2+). Mn(2+) is bound by residues Gln-823, Glu-835, and Asn-837. Residues 932 to 1069 (NMYPSKEKGK…KDLEVFDITK (138 aa)) enclose the MGS-like domain. Residues 933–1069 (MYPSKEKGKI…KDLEVFDITK (137 aa)) form an allosteric domain region.

Belongs to the CarB family. As to quaternary structure, composed of two chains; the small (or glutamine) chain promotes the hydrolysis of glutamine to ammonia, which is used by the large (or ammonia) chain to synthesize carbamoyl phosphate. Tetramer of heterodimers (alpha,beta)4. Mg(2+) serves as cofactor. The cofactor is Mn(2+).

It carries out the reaction hydrogencarbonate + L-glutamine + 2 ATP + H2O = carbamoyl phosphate + L-glutamate + 2 ADP + phosphate + 2 H(+). The catalysed reaction is hydrogencarbonate + NH4(+) + 2 ATP = carbamoyl phosphate + 2 ADP + phosphate + 2 H(+). It functions in the pathway amino-acid biosynthesis; L-arginine biosynthesis; carbamoyl phosphate from bicarbonate: step 1/1. Its pathway is pyrimidine metabolism; UMP biosynthesis via de novo pathway; (S)-dihydroorotate from bicarbonate: step 1/3. Functionally, large subunit of the glutamine-dependent carbamoyl phosphate synthetase (CPSase). CPSase catalyzes the formation of carbamoyl phosphate from the ammonia moiety of glutamine, carbonate, and phosphate donated by ATP, constituting the first step of 2 biosynthetic pathways, one leading to arginine and/or urea and the other to pyrimidine nucleotides. The large subunit (synthetase) binds the substrates ammonia (free or transferred from glutamine from the small subunit), hydrogencarbonate and ATP and carries out an ATP-coupled ligase reaction, activating hydrogencarbonate by forming carboxy phosphate which reacts with ammonia to form carbamoyl phosphate. The sequence is that of Carbamoyl phosphate synthase large chain from Clostridium botulinum (strain Eklund 17B / Type B).